The sequence spans 372 residues: 2-aminoethylphosphonate--pyruvate transaminase 2 (372 aa).

Lysine 192 is modified (N6-(pyridoxal phosphate)lysine).

This sequence belongs to the class-V pyridoxal-phosphate-dependent aminotransferase family. PhnW subfamily. In terms of assembly, homodimer. It depends on pyridoxal 5'-phosphate as a cofactor.

The catalysed reaction is (2-aminoethyl)phosphonate + pyruvate = phosphonoacetaldehyde + L-alanine. Its function is as follows. Involved in phosphonate degradation. The protein is 2-aminoethylphosphonate--pyruvate transaminase 2 of Polaromonas sp. (strain JS666 / ATCC BAA-500).